A 356-amino-acid polypeptide reads, in one-letter code: tRNA N6-adenosine threonylcarbamoyltransferase (356 aa).

Fe cation is bound by residues H110 and H114. Residues 133–137 (LVSGG), D166, G179, and N276 contribute to the substrate site. Fe cation is bound at residue D304.

Belongs to the KAE1 / TsaD family. Requires Fe(2+) as cofactor.

It localises to the cytoplasm. The catalysed reaction is L-threonylcarbamoyladenylate + adenosine(37) in tRNA = N(6)-L-threonylcarbamoyladenosine(37) in tRNA + AMP + H(+). In terms of biological role, required for the formation of a threonylcarbamoyl group on adenosine at position 37 (t(6)A37) in tRNAs that read codons beginning with adenine. Is involved in the transfer of the threonylcarbamoyl moiety of threonylcarbamoyl-AMP (TC-AMP) to the N6 group of A37, together with TsaE and TsaB. TsaD likely plays a direct catalytic role in this reaction. The sequence is that of tRNA N6-adenosine threonylcarbamoyltransferase from Teredinibacter turnerae (strain ATCC 39867 / T7901).